The following is a 116-amino-acid chain: Large ribosomal subunit protein bL20 (116 aa).

It belongs to the bacterial ribosomal protein bL20 family.

Its function is as follows. Binds directly to 23S ribosomal RNA and is necessary for the in vitro assembly process of the 50S ribosomal subunit. It is not involved in the protein synthesizing functions of that subunit. This Nautilia profundicola (strain ATCC BAA-1463 / DSM 18972 / AmH) protein is Large ribosomal subunit protein bL20.